Consider the following 85-residue polypeptide: Large ribosomal subunit protein bL31B (85 aa).

It belongs to the bacterial ribosomal protein bL31 family. Type B subfamily. As to quaternary structure, part of the 50S ribosomal subunit.

In Macrococcus caseolyticus (strain JCSC5402) (Macrococcoides caseolyticum), this protein is Large ribosomal subunit protein bL31B.